We begin with the raw amino-acid sequence, 349 residues long: Anthranilate phosphoribosyltransferase (349 aa).

5-phospho-alpha-D-ribose 1-diphosphate is bound by residues glycine 87, 90–91 (GD), threonine 95, 97–100 (NIST), 115–123 (KHGNRSVSS), and serine 127. Glycine 87 serves as a coordination point for anthranilate. Serine 99 serves as a coordination point for Mg(2+). Asparagine 118 contacts anthranilate. Arginine 173 provides a ligand contact to anthranilate. Aspartate 231 and glutamate 232 together coordinate Mg(2+).

The protein belongs to the anthranilate phosphoribosyltransferase family. Homodimer. Mg(2+) is required as a cofactor.

The catalysed reaction is N-(5-phospho-beta-D-ribosyl)anthranilate + diphosphate = 5-phospho-alpha-D-ribose 1-diphosphate + anthranilate. It functions in the pathway amino-acid biosynthesis; L-tryptophan biosynthesis; L-tryptophan from chorismate: step 2/5. Functionally, catalyzes the transfer of the phosphoribosyl group of 5-phosphorylribose-1-pyrophosphate (PRPP) to anthranilate to yield N-(5'-phosphoribosyl)-anthranilate (PRA). This chain is Anthranilate phosphoribosyltransferase, found in Shewanella loihica (strain ATCC BAA-1088 / PV-4).